Here is a 257-residue protein sequence, read N- to C-terminus: uncharacterized protein (257 aa).

G7–T14 lines the ATP pocket.

This sequence to M.jannaschii MJ0084 and MJ0685.

This is an uncharacterized protein from Methanocaldococcus jannaschii (strain ATCC 43067 / DSM 2661 / JAL-1 / JCM 10045 / NBRC 100440) (Methanococcus jannaschii).